The sequence spans 771 residues: Metal transporter CNNM4 (771 aa).

Over 1-175 (MAPGGGGGRR…LLFMVEEHGR (175 aa)) the chain is Extracellular. Asn119 carries an N-linked (GlcNAc...) asparagine glycan. The CNNM transmembrane domain occupies 175 to 355 (RFLPLWLHIL…EPYNDLVKEE (181 aa)). A helical membrane pass occupies residues 176–196 (FLPLWLHILLVMVLLVLSGIF). At 197 to 237 (SGLNLGLMALDPMELRIVQNCGTEKERKYARKIEPIRRKGN) the chain is on the cytoplasmic side. The segment at residues 238–258 (YLLCSLLLGNVLVNTSLTILL) is an intramembrane region (helical). At 259–261 (DNL) the chain is on the cytoplasmic side. The chain crosses the membrane as a helical span at residues 262-282 (IGSGIMAVASSTIGIVIFGEI). Residues 283–290 (LPQALCSR) are Extracellular-facing. A helical membrane pass occupies residues 291-313 (HGLAVGANTIVLTKVFMLLTFPL). Residues 314 to 771 (SFPISKLLDF…LHRASEEETI (458 aa)) are Cytoplasmic-facing. CBS domains lie at 374-435 (MTQL…CTPL) and 442-508 (YNHP…ILDE). Residues Ser657, Ser661, and Ser766 each carry the phosphoserine modification.

The protein belongs to the ACDP family. Interacts with COX11. As to expression, cornea, retina, teeth (at protein level). In the retina it is predominantly localized to the outer plexiform layer, inner plexiform layer and ganglion cell layer. In the tooth strongest expression is observed in the cell body of the ameloblasts. Expressed at high levels in the gastrointestinal tract and testis.

It is found in the cell membrane. Probable metal transporter. The interaction with the metal ion chaperone COX11 suggests that it may play a role in sensory neuron functions. May play a role in biomineralization and retinal function. This is Metal transporter CNNM4 (Cnnm4) from Mus musculus (Mouse).